The sequence spans 325 residues: Electron transfer flavoprotein subunit alpha (325 aa).

262-290 serves as a coordination point for FAD; it reads LYIACGISGAIQHLAGMSNSKVIVAINKD.

This sequence belongs to the ETF alpha-subunit/FixB family. Heterodimer of an alpha and a beta subunit. FAD serves as cofactor.

Its function is as follows. The electron transfer flavoprotein serves as a specific electron acceptor for other dehydrogenases. It transfers the electrons to the main respiratory chain via ETF-ubiquinone oxidoreductase (ETF dehydrogenase). The chain is Electron transfer flavoprotein subunit alpha (etfA) from Bacillus subtilis (strain 168).